The sequence spans 299 residues: MFDYKLLSALAAVIEQAGFERAAQVLGLSQSAISQRIKLLEARVGQPVLVRVTPPAPTEIGRRLLNHVQQVRLLERDLQSLVPALDEEGLPERLRIALNADSLATWWAGAVGDFCAEHHLLLDLVVEDQTVGLKRMRAGEVAACVCASERPVAGARSLLLGAMRYRAMASPEFIVRHFPQGVRAEQLPRTPALVFGPDDFLQHRYLASLGVDGAFEHHLCPSSEGFIRLTEAGLGWGLVPELQVREQLERGLLLELLPDKPIDVPLYWHHWRNGGQLLGLLTEHLARLSAQWLVPWEQP.

Residues Phe-2–Thr-58 form the HTH lysR-type domain. A DNA-binding region (H-T-H motif) is located at residues Phe-19–Lys-38.

The protein belongs to the LysR transcriptional regulatory family. In terms of assembly, homodimer.

Controls the transcription of genes involved in arginine and lysine metabolism. The polypeptide is HTH-type transcriptional regulator ArgP (Pseudomonas fluorescens (strain ATCC BAA-477 / NRRL B-23932 / Pf-5)).